Reading from the N-terminus, the 360-residue chain is UPF0496 protein At3g19250 (360 aa).

A disordered region spans residues 1-29 (MPHCFTFKPASPEGSLGDDHLPHPSPEGS). The next 2 membrane-spanning stretches (helical) occupy residues 205 to 225 (HHAT…VAAS) and 229 to 249 (IAYH…TPYL).

Belongs to the UPF0496 family.

The protein resides in the membrane. The chain is UPF0496 protein At3g19250 from Arabidopsis thaliana (Mouse-ear cress).